A 555-amino-acid chain; its full sequence is Probable metabolite transport protein YDR387C (555 aa).

At 1-39 (MSTDESEDVYSDLYSIISQVTSNTANDIEQLPYALTFKT) the chain is on the cytoplasmic side. Residues 40–60 (SLIFVGATIGGLLFGYDTGVI) traverse the membrane as a helical segment. The Extracellular segment spans residues 61-83 (SGVLLSLKPEDLSLVVLTDVQKE). Residues 84–104 (LITSSTSVGSFFGSILAFPLA) traverse the membrane as a helical segment. Residues 105 to 118 (DRYGRRITLAICCS) lie on the Cytoplasmic side of the membrane. The chain crosses the membrane as a helical span at residues 119–139 (IFILAAIGMAIARTLTFLICG). Arginine 140 is a topological domain (extracellular). A helical membrane pass occupies residues 141-161 (LLVGIAVGVSAQCVPLFLSEI). At 162-168 (SPSRIRG) the chain is on the cytoplasmic side. Residues 169–189 (FMLTLNIIAITGGQLVSYVIA) form a helical membrane-spanning segment. The Extracellular portion of the chain corresponds to 190 to 200 (SLMKEIDNSWR). A helical membrane pass occupies residues 201-221 (YLFALSAIPAILFLSILDFIP). Residues 222–356 (ESPRWSISKG…TIRALIVGCM (135 aa)) lie on the Cytoplasmic side of the membrane. Residues 289-313 (SSTSGTLSPPNIKRLSSNTERTSNT) are disordered. The helical transmembrane segment at 357–377 (LMFFQQITGFNAFMYYAAIIF) threads the bilayer. Residues 378–384 (SKFNIKN) are Extracellular-facing. A helical membrane pass occupies residues 385–405 (PLLPPILIASTNFIFTFFAMY). Residues 406–413 (TMDSLGRR) are Cytoplasmic-facing. A helical transmembrane segment spans residues 414 to 434 (AILLRTILIMTVGLLLCSVGF). At 435–440 (GHDQVN) the chain is on the extracellular side. The chain crosses the membrane as a helical span at residues 441–461 (LLLISVVIYVAAYASAMGSVP). Residues 462–474 (WTCVEFLPLNRRS) lie on the Cytoplasmic side of the membrane. Residues 475–497 (FGASCIACTNWLTNAFVSMTYLS) traverse the membrane as a helical segment. Residues 498 to 506 (TINTIGDEN) are Extracellular-facing. Residues 507–527 (TMLIFAFFTVCAWFFVYFWYP) form a helical membrane-spanning segment. Residues 528 to 555 (EVKGLSLEEVGRVFDNGIDVHYVFRTYH) are Cytoplasmic-facing.

It belongs to the major facilitator superfamily. Sugar transporter (TC 2.A.1.1) family.

It localises to the membrane. The protein is Probable metabolite transport protein YDR387C of Saccharomyces cerevisiae (strain ATCC 204508 / S288c) (Baker's yeast).